Consider the following 211-residue polypeptide: Putative hydrolase SMU_367 (211 aa).

The N-terminal stretch at 1–29 (MKKQFLEKAVFTVAATAATVVLGNKMADA) is a signal peptide. The region spanning 30–74 (DTYTLQEGDSFFSVAQRYHMDAYELASMNGKDITSLILPGQTLTV) is the LysM domain. The interval 77 to 101 (SAAPDNQAAAPTDTTQATTETNDAN) is disordered. Over residues 78–101 (AAPDNQAAAPTDTTQATTETNDAN) the composition is skewed to low complexity. Residues 85 to 209 (AAPTDTTQAT…GTPGSVSYIY (125 aa)) enclose the Peptidase C51 domain.

The polypeptide is Putative hydrolase SMU_367 (Streptococcus mutans serotype c (strain ATCC 700610 / UA159)).